The primary structure comprises 620 residues: Glutathione-regulated potassium-efflux system protein KefC (620 aa).

Helical transmembrane passes span 4–24 (HTLI…PIAV), 26–46 (LGLG…PWGL), 54–74 (SILH…GLEL), 90–110 (GALQ…LLGL), 114–134 (VAEL…MQAM), 149–169 (FAVL…IPLL), 178–198 (MGAF…VVLL), 218–238 (VFSA…EEVG), 270–290 (GLLL…GTLI), 294–314 (LRIV…LWLI), 327–347 (WFAV…GAAQ), and 359–379 (SLTL…VILN). The region spanning 399-518 (QPRVIIAGFG…AGVEKPERET (120 aa)) is the RCK N-terminal domain. The segment at 597-620 (GWQGTEEGKHTGNMADEPETKPSS) is disordered.

This sequence belongs to the monovalent cation:proton antiporter 2 (CPA2) transporter (TC 2.A.37) family. KefC subfamily. In terms of assembly, homodimer. Interacts with the regulatory subunit KefF.

It is found in the cell inner membrane. Functionally, pore-forming subunit of a potassium efflux system that confers protection against electrophiles. Catalyzes K(+)/H(+) antiport. The sequence is that of Glutathione-regulated potassium-efflux system protein KefC from Escherichia coli O17:K52:H18 (strain UMN026 / ExPEC).